The chain runs to 1900 residues: Phosphatidylinositol 4-kinase STT4 (1900 aa).

Position 459 is a phosphoserine (S459). A PIK helical domain is found at 1345 to 1530 (KIEGADSNEL…KPTLDRIRER (186 aa)). A pleckstrin homology (PH) domain conferring phosphoinositide binding specificity region spans residues 1531–1648 (MVSSFSQSHR…EKWQAAIFKV (118 aa)). Positions 1617-1884 (FMATFKIKKD…LIRKSYESIF (268 aa)) constitute a PI3K/PI4K catalytic domain. A G-loop region spans residues 1623-1629 (IKKDVKD). Residues 1751–1759 (QFKDRHNGN) are catalytic loop. The tract at residues 1770–1794 (HIDFGFIFDIVPGGIKFEAVPFKLT) is activation loop.

This sequence belongs to the PI3/PI4-kinase family. Type III PI4K subfamily.

The catalysed reaction is a 1,2-diacyl-sn-glycero-3-phospho-(1D-myo-inositol) + ATP = a 1,2-diacyl-sn-glycero-3-phospho-(1D-myo-inositol 4-phosphate) + ADP + H(+). Its function is as follows. Acts on phosphatidylinositol (PI) in the first committed step in the production of the second messenger inositol 1,4,5,-trisphosphate. STT4 functions in PKC1 protein kinase pathway. This Saccharomyces cerevisiae (strain ATCC 204508 / S288c) (Baker's yeast) protein is Phosphatidylinositol 4-kinase STT4 (STT4).